Here is a 101-residue protein sequence, read N- to C-terminus: uncharacterized protein (101 aa).

A disordered region spans residues 39 to 74; that stretch reads CDERHGRPLPHSQESQHGSATSKKAVRGTADTAPLE. Residues 50–60 are compositionally biased toward polar residues; that stretch reads SQESQHGSATS.

This is an uncharacterized protein from Homo sapiens (Human).